A 123-amino-acid chain; its full sequence is Small ribosomal subunit protein uS12 (123 aa).

A 3-methylthioaspartic acid modification is found at D89.

It belongs to the universal ribosomal protein uS12 family. As to quaternary structure, part of the 30S ribosomal subunit. Contacts proteins S8 and S17. May interact with IF1 in the 30S initiation complex.

Its function is as follows. With S4 and S5 plays an important role in translational accuracy. Interacts with and stabilizes bases of the 16S rRNA that are involved in tRNA selection in the A site and with the mRNA backbone. Located at the interface of the 30S and 50S subunits, it traverses the body of the 30S subunit contacting proteins on the other side and probably holding the rRNA structure together. The combined cluster of proteins S8, S12 and S17 appears to hold together the shoulder and platform of the 30S subunit. This chain is Small ribosomal subunit protein uS12, found in Trichlorobacter lovleyi (strain ATCC BAA-1151 / DSM 17278 / SZ) (Geobacter lovleyi).